A 151-amino-acid polypeptide reads, in one-letter code: Small ribosomal subunit protein uS15 (151 aa).

The protein belongs to the universal ribosomal protein uS15 family. As to quaternary structure, component of the small ribosomal subunit. Mature ribosomes consist of a small (40S) and a large (60S) subunit. The 40S subunit contains about 32 different proteins and 1 molecule of RNA (18S). The 60S subunit contains 45 different proteins and 3 molecules of RNA (25S, 5.8S and 5S).

The protein resides in the cytoplasm. Functionally, component of the ribosome, a large ribonucleoprotein complex responsible for the synthesis of proteins in the cell. The small ribosomal subunit (SSU) binds messenger RNAs (mRNAs) and translates the encoded message by selecting cognate aminoacyl-transfer RNA (tRNA) molecules. The large subunit (LSU) contains the ribosomal catalytic site termed the peptidyl transferase center (PTC), which catalyzes the formation of peptide bonds, thereby polymerizing the amino acids delivered by tRNAs into a polypeptide chain. The nascent polypeptides leave the ribosome through a tunnel in the LSU and interact with protein factors that function in enzymatic processing, targeting, and the membrane insertion of nascent chains at the exit of the ribosomal tunnel. This Candida albicans (strain SC5314 / ATCC MYA-2876) (Yeast) protein is Small ribosomal subunit protein uS15 (RPS13).